A 416-amino-acid chain; its full sequence is Probable mannose-6-phosphate isomerase (416 aa).

Gln99, His101, Glu126, and His259 together coordinate Zn(2+). Arg278 is a catalytic residue.

It belongs to the mannose-6-phosphate isomerase type 1 family. It depends on Zn(2+) as a cofactor.

It is found in the cytoplasm. The enzyme catalyses D-mannose 6-phosphate = D-fructose 6-phosphate. It functions in the pathway nucleotide-sugar biosynthesis; GDP-alpha-D-mannose biosynthesis; alpha-D-mannose 1-phosphate from D-fructose 6-phosphate: step 1/2. Its function is as follows. Involved in the synthesis of the GDP-mannose and dolichol-phosphate-mannose required for a number of critical mannosyl transfer reactions. The chain is Probable mannose-6-phosphate isomerase from Caenorhabditis elegans.